A 363-amino-acid polypeptide reads, in one-letter code: Neutral protease 2 homolog NFIA_102630 (363 aa).

The N-terminal stretch at 1–19 is a signal peptide; sequence MKVTVLASAILALINGALA. A propeptide spanning residues 20–172 is cleaved from the precursor; it reads LPANAPTLDV…PQAIKLLDRR (153 aa). 2 disulfide bridges follow: Cys178/Cys250 and Cys257/Cys275. His300 is a Zn(2+) binding site. Glu301 is a catalytic residue. Zn(2+) contacts are provided by His304 and Asp315.

It belongs to the peptidase M35 family. Requires Zn(2+) as cofactor.

The protein resides in the secreted. It catalyses the reaction Preferential cleavage of bonds with hydrophobic residues in P1'. Also 3-Asn-|-Gln-4 and 8-Gly-|-Ser-9 bonds in insulin B chain.. In terms of biological role, secreted metalloproteinase that allows assimilation of proteinaceous substrates. Shows high activities on basic nuclear substrates such as histone and protamine. This Neosartorya fischeri (strain ATCC 1020 / DSM 3700 / CBS 544.65 / FGSC A1164 / JCM 1740 / NRRL 181 / WB 181) (Aspergillus fischerianus) protein is Neutral protease 2 homolog NFIA_102630.